The following is a 197-amino-acid chain: ATP-dependent Clp protease proteolytic subunit 1 (197 aa).

The active-site Nucleophile is the S96. The active site involves H121.

This sequence belongs to the peptidase S14 family. As to quaternary structure, fourteen ClpP subunits assemble into 2 heptameric rings which stack back to back to give a disk-like structure with a central cavity, resembling the structure of eukaryotic proteasomes.

Its subcellular location is the cytoplasm. It catalyses the reaction Hydrolysis of proteins to small peptides in the presence of ATP and magnesium. alpha-casein is the usual test substrate. In the absence of ATP, only oligopeptides shorter than five residues are hydrolyzed (such as succinyl-Leu-Tyr-|-NHMec, and Leu-Tyr-Leu-|-Tyr-Trp, in which cleavage of the -Tyr-|-Leu- and -Tyr-|-Trp bonds also occurs).. Functionally, cleaves peptides in various proteins in a process that requires ATP hydrolysis. Has a chymotrypsin-like activity. Plays a major role in the degradation of misfolded proteins. The chain is ATP-dependent Clp protease proteolytic subunit 1 from Synechococcus sp. (strain ATCC 27144 / PCC 6301 / SAUG 1402/1) (Anacystis nidulans).